A 155-amino-acid chain; its full sequence is Class I hydrophobin C (155 aa).

Residues 1–22 (MLVTMRLSRSIAVFTLVTYATG) form the signal peptide. Intrachain disulfides connect cysteine 52/cysteine 129, cysteine 60/cysteine 123, cysteine 61/cysteine 101, and cysteine 130/cysteine 148.

The protein belongs to the fungal hydrophobin family. As to quaternary structure, self-assembles to form functional amyloid fibrils called rodlets. Self-assembly into fibrillar rodlets occurs spontaneously at hydrophobic:hydrophilic interfaces and the rodlets further associate laterally to form amphipathic monolayers.

The protein resides in the secreted. It is found in the spore wall. Aerial growth, conidiation, and dispersal of filamentous fungi in the environment rely upon a capability of their secreting small amphipathic proteins called hydrophobins (HPBs) with low sequence identity. Class I can self-assemble into an outermost layer of rodlet bundles on aerial cell surfaces, conferring cellular hydrophobicity that supports fungal growth, development and dispersal; whereas Class II form highly ordered films at water-air interfaces through intermolecular interactions but contribute nothing to the rodlet structure. RodC is a class I hydrophobin that, unlike rodA, is not required for rodlet formation. The chain is Class I hydrophobin C from Aspergillus fumigatus (strain ATCC MYA-4609 / CBS 101355 / FGSC A1100 / Af293) (Neosartorya fumigata).